The chain runs to 407 residues: FMN-dependent alpha-hydroxy acid dehydrogenase PB1A11.03 (407 aa).

The FMN hydroxy acid dehydrogenase domain occupies Q28–E406. Position 54 (Y54) interacts with a 2-oxocarboxylate. Residues S136 and Q158 each contribute to the FMN site. Position 160 (Y160) interacts with a 2-oxocarboxylate. T188 contributes to the FMN binding site. R197 lines the a 2-oxocarboxylate pocket. K277 provides a ligand contact to FMN. H301 functions as the Proton acceptor in the catalytic mechanism. Residue R304 participates in a 2-oxocarboxylate binding. FMN contacts are provided by residues D332–R336 and G355–R356.

The protein belongs to the FMN-dependent alpha-hydroxy acid dehydrogenase family. Requires FMN as cofactor.

Its subcellular location is the cytoplasm. It is found in the nucleus. The polypeptide is FMN-dependent alpha-hydroxy acid dehydrogenase PB1A11.03 (Schizosaccharomyces pombe (strain 972 / ATCC 24843) (Fission yeast)).